The sequence spans 514 residues: 2,3-bisphosphoglycerate-independent phosphoglycerate mutase (514 aa).

Mn(2+) is bound by residues Asp-14 and Ser-64. Ser-64 acts as the Phosphoserine intermediate in catalysis. Substrate is bound by residues His-125, 155–156 (RD), Arg-187, Arg-193, 263–266 (RADR), and Lys-336. Residues Asp-403, His-407, Asp-444, His-445, and His-463 each contribute to the Mn(2+) site.

The protein belongs to the BPG-independent phosphoglycerate mutase family. In terms of assembly, monomer. Mn(2+) serves as cofactor.

The enzyme catalyses (2R)-2-phosphoglycerate = (2R)-3-phosphoglycerate. Its pathway is carbohydrate degradation; glycolysis; pyruvate from D-glyceraldehyde 3-phosphate: step 3/5. In terms of biological role, catalyzes the interconversion of 2-phosphoglycerate and 3-phosphoglycerate. The chain is 2,3-bisphosphoglycerate-independent phosphoglycerate mutase from Shewanella sp. (strain MR-7).